The chain runs to 422 residues: UDP-N-acetylglucosamine 1-carboxyvinyltransferase (422 aa).

22 to 23 contributes to the phosphoenolpyruvate binding site; the sequence is KN. Arg94 contributes to the UDP-N-acetyl-alpha-D-glucosamine binding site. Catalysis depends on Cys118, which acts as the Proton donor. The residue at position 118 (Cys118) is a 2-(S-cysteinyl)pyruvic acid O-phosphothioketal. UDP-N-acetyl-alpha-D-glucosamine contacts are provided by residues 123–127, 163–166, Asp308, and Ile330; these read RPVDL and KVSV.

Belongs to the EPSP synthase family. MurA subfamily.

It is found in the cytoplasm. The enzyme catalyses phosphoenolpyruvate + UDP-N-acetyl-alpha-D-glucosamine = UDP-N-acetyl-3-O-(1-carboxyvinyl)-alpha-D-glucosamine + phosphate. The protein operates within cell wall biogenesis; peptidoglycan biosynthesis. In terms of biological role, cell wall formation. Adds enolpyruvyl to UDP-N-acetylglucosamine. This is UDP-N-acetylglucosamine 1-carboxyvinyltransferase from Yersinia enterocolitica serotype O:8 / biotype 1B (strain NCTC 13174 / 8081).